The primary structure comprises 788 residues: Autophagy-related protein 9 (788 aa).

The Cytoplasmic segment spans residues 1–171; that stretch reads MTDKSTFLSV…EAYMYYTGKG (171 aa). Over residues 32 to 42 the composition is skewed to basic and acidic residues; that stretch reads ILRRVEEEHAQ. The tract at residues 32–127 is disordered; that stretch reads ILRRVEEEHA…TGVANGGLPR (96 aa). Residues 44–58 are compositionally biased toward low complexity; sequence SDNSNSDNDSGNDSD. The span at 101–112 shows a compositional bias: polar residues; it reads SFAQGTKTQTPI. A helical membrane pass occupies residues 172-192; that stretch reads LVSIILSRVLNMSTIMFVVVF. The Lumenal portion of the chain corresponds to 193-222; the sequence is STYLGSCIDYSKIKGSRTLDEVHVKQCYAK. A helical membrane pass occupies residues 223–243; sequence LGSFHVFVLWTFFVLWFMKLF. At 244 to 390 the chain is on the cytoplasmic side; that stretch reads QYVKDIRRLV…QILSTGLRRR (147 aa). Residue Phe391 is an intramembrane region. Over 392-479 the chain is Cytoplasmic; it reads VFAAIMNVVF…PKEKTALVSK (88 aa). The chain crosses the membrane as a helical span at residues 480 to 500; that stretch reads FVSFIAGSFAAVLGIASLIDP. Residues 501–512 lie on the Lumenal side of the membrane; that stretch reads ELFLMFEISANR. The chain crosses the membrane as a helical span at residues 513–533; it reads TVLFYIGVFGSILAVSRSLIP. Residues 534–579 are Cytoplasmic-facing; that stretch reads EETLVFDPEISLRYVAEFTHYLPPEWEGKLHTEQVKNEFSLMYEMR. An intramembrane segment occupies 580-600; that stretch reads LIILLKELASIFLAPFILYYS. Residues 601-788 lie on the Cytoplasmic side of the membrane; the sequence is LTQSCDDIVD…KKTDNMNLGA (188 aa). The segment at 715 to 736 is disordered; it reads LSPAAPTATTATSGTATGAAPR. The span at 716–734 shows a compositional bias: low complexity; that stretch reads SPAAPTATTATSGTATGAA.

This sequence belongs to the ATG9 family. In terms of assembly, homotrimer; forms a homotrimer with a central pore that forms a path between the two membrane leaflets. Phosphorylated by ATG1. ATG1 phosphorylation is required for preautophagosome elongation.

Its subcellular location is the preautophagosomal structure membrane. It localises to the cytoplasmic vesicle membrane. The protein localises to the golgi apparatus membrane. It is found in the endoplasmic reticulum membrane. It carries out the reaction a 1,2-diacyl-sn-glycero-3-phosphocholine(in) = a 1,2-diacyl-sn-glycero-3-phosphocholine(out). It catalyses the reaction a 1,2-diacyl-sn-glycero-3-phospho-L-serine(in) = a 1,2-diacyl-sn-glycero-3-phospho-L-serine(out). The catalysed reaction is a 1,2-diacyl-sn-glycero-3-phosphoethanolamine(in) = a 1,2-diacyl-sn-glycero-3-phosphoethanolamine(out). The enzyme catalyses a 1,2-diacyl-sn-glycero-3-phospho-(1D-myo-inositol-3-phosphate)(in) = a 1,2-diacyl-sn-glycero-3-phospho-(1D-myo-inositol-3-phosphate)(out). Phospholipid scramblase involved in autophagy and cytoplasm to vacuole transport (Cvt) vesicle formation. Cycles between the preautophagosomal structure/phagophore assembly site (PAS) and the cytoplasmic vesicle pool and supplies membrane for the growing autophagosome. Lipid scramblase activity plays a key role in preautophagosomal structure/phagophore assembly by distributing the phospholipids that arrive through ATG2 from the cytoplasmic to the luminal leaflet of the bilayer, thereby driving autophagosomal membrane expansion. Required for mitophagy. Also involved in endoplasmic reticulum-specific autophagic process and is essential for the survival of cells subjected to severe ER stress. Different machineries are required for anterograde trafficking to the PAS during either the Cvt pathway or bulk autophagy and for retrograde trafficking. The chain is Autophagy-related protein 9 from Yarrowia lipolytica (strain CLIB 122 / E 150) (Yeast).